Reading from the N-terminus, the 290-residue chain is Glutamate racemase (290 aa).

Substrate-binding positions include 24–25 (DS) and 56–57 (YG). C87 acts as the Proton donor/acceptor in catalysis. 88–89 (NT) provides a ligand contact to substrate. The Proton donor/acceptor role is filled by C199. 200-201 (TH) is a substrate binding site. A disordered region spans residues 271 to 290 (GADGASLPDPPSPRIELTTT).

The protein belongs to the aspartate/glutamate racemases family.

It carries out the reaction L-glutamate = D-glutamate. It participates in cell wall biogenesis; peptidoglycan biosynthesis. Functionally, provides the (R)-glutamate required for cell wall biosynthesis. The sequence is that of Glutamate racemase from Deinococcus radiodurans (strain ATCC 13939 / DSM 20539 / JCM 16871 / CCUG 27074 / LMG 4051 / NBRC 15346 / NCIMB 9279 / VKM B-1422 / R1).